The sequence spans 132 residues: Inclusion membrane protein E (132 aa).

The next 2 membrane-spanning stretches (helical) occupy residues 41–61 (LGVV…AVGV) and 66–86 (FALG…ATSA).

The protein localises to the secreted. The protein resides in the host vacuole. It localises to the host pathogen-containing vacuole. It is found in the host pathogen-containing vacuole membrane. Inclusion membrane protein probably involved in early modification events of the chlamydial inclusion. In Chlamydia trachomatis serovar L2 (strain ATCC VR-902B / DSM 19102 / 434/Bu), this protein is Inclusion membrane protein E.